Here is a 143-residue protein sequence, read N- to C-terminus: Nucleoside diphosphate kinase (143 aa).

The ATP site is built by Lys11, Phe59, Arg87, Thr93, Arg104, and Asn114. Catalysis depends on His117, which acts as the Pros-phosphohistidine intermediate.

The protein belongs to the NDK family. As to quaternary structure, homotetramer. Mg(2+) is required as a cofactor.

The protein localises to the cytoplasm. It carries out the reaction a 2'-deoxyribonucleoside 5'-diphosphate + ATP = a 2'-deoxyribonucleoside 5'-triphosphate + ADP. The enzyme catalyses a ribonucleoside 5'-diphosphate + ATP = a ribonucleoside 5'-triphosphate + ADP. Major role in the synthesis of nucleoside triphosphates other than ATP. The ATP gamma phosphate is transferred to the NDP beta phosphate via a ping-pong mechanism, using a phosphorylated active-site intermediate. This chain is Nucleoside diphosphate kinase, found in Clostridium perfringens (strain SM101 / Type A).